Consider the following 38-residue polypeptide: Large ribosomal subunit protein bL36 (38 aa).

This sequence belongs to the bacterial ribosomal protein bL36 family.

The sequence is that of Large ribosomal subunit protein bL36 from Ectopseudomonas mendocina (strain ymp) (Pseudomonas mendocina).